The sequence spans 342 residues: Isopentenyl-diphosphate delta-isomerase (342 aa).

11–12 (RK) is a binding site for substrate. FMN-binding positions include Ser-68, 69-71 (SMT), Ser-99, and Asn-127. 99–101 (SMR) lines the substrate pocket. Residue Gln-162 coordinates substrate. Glu-163 is a Mg(2+) binding site. FMN-binding positions include Lys-194, Thr-224, 274–276 (GLK), and 295–296 (AG).

Belongs to the IPP isomerase type 2 family. As to quaternary structure, homooctamer. Dimer of tetramers. The cofactor is FMN. NADPH serves as cofactor. Requires Mg(2+) as cofactor.

The protein resides in the cytoplasm. The enzyme catalyses isopentenyl diphosphate = dimethylallyl diphosphate. Functionally, involved in the biosynthesis of isoprenoids. Catalyzes the 1,3-allylic rearrangement of the homoallylic substrate isopentenyl (IPP) to its allylic isomer, dimethylallyl diphosphate (DMAPP). The sequence is that of Isopentenyl-diphosphate delta-isomerase from Rickettsia canadensis (strain McKiel).